A 965-amino-acid chain; its full sequence is Aminopeptidase N (965 aa).

Residues 2–8 lie on the Cytoplasmic side of the membrane; the sequence is AKGFYIS. A helical; Signal-anchor for type II membrane protein transmembrane segment spans residues 9-32; it reads KTLGILGILLGVAAVCTIIALSVV. The tract at residues 33–68 is cytosolic Ser/Thr-rich junction; sequence YAQEKNRNAENSAIAPTLPGSTSATTSTTNPAIDES. At 33 to 965 the chain is on the extracellular side; it reads YAQEKNRNAE…VVLKWFTENS (933 aa). Residues 44-68 are disordered; the sequence is SAIAPTLPGSTSATTSTTNPAIDES. Over residues 47–64 the composition is skewed to low complexity; sequence APTLPGSTSATTSTTNPA. The tract at residues 69 to 965 is metalloprotease; the sequence is KPWNQYRLPK…VVLKWFTENS (897 aa). 2 N-linked (GlcNAc...) asparagine glycosylation sites follow: asparagine 114 and asparagine 128. Tyrosine 176 is subject to Sulfotyrosine. 3 N-linked (GlcNAc...) asparagine glycosylation sites follow: asparagine 234, asparagine 242, and asparagine 264. 351 to 355 serves as a coordination point for substrate; the sequence is GAMEN. Residue histidine 387 coordinates Zn(2+). The active-site Proton acceptor is the glutamate 388. The Zn(2+) site is built by histidine 391 and glutamate 410. 3 N-linked (GlcNAc...) asparagine glycosylation sites follow: asparagine 555, asparagine 606, and asparagine 624. A disulfide bridge links cysteine 760 with cysteine 767. Asparagine 780 is a glycosylation site (N-linked (GlcNAc...) asparagine). Cysteine 797 and cysteine 833 are joined by a disulfide. The residue at position 852 (tyrosine 852) is a Phosphotyrosine.

This sequence belongs to the peptidase M1 family. In terms of assembly, homodimer. Interacts with SLC6A19. Zn(2+) is required as a cofactor. Post-translationally, sulfated. In terms of processing, N- and O-glycosylated. May undergo proteolysis and give rise to a soluble form. As to expression, widely distributed throughout the CNS. Particularly abundant in kidney and intestinal microvilli, also detected in lung and liver. Weakly expressed in heart and aorta.

It is found in the cell membrane. It catalyses the reaction Release of an N-terminal amino acid, Xaa-|-Yaa- from a peptide, amide or arylamide. Xaa is preferably Ala, but may be most amino acids including Pro (slow action). When a terminal hydrophobic residue is followed by a prolyl residue, the two may be released as an intact Xaa-Pro dipeptide.. In terms of biological role, broad specificity aminopeptidase which plays a role in the final digestion of peptides generated from hydrolysis of proteins by gastric and pancreatic proteases. Also involved in the processing of various peptides including peptide hormones, such as angiotensin III and IV, neuropeptides, and chemokines. May also be involved the cleavage of peptides bound to major histocompatibility complex class II molecules of antigen presenting cells. May have a role in angiogenesis and promote cholesterol crystallization. May have a role in amino acid transport by acting as binding partner of amino acid transporter SLC6A19 and regulating its activity. This is Aminopeptidase N (Anpep) from Rattus norvegicus (Rat).